Consider the following 372-residue polypeptide: uncharacterized protein (372 aa).

The signal sequence occupies residues 1–24; that stretch reads MSYYQIIVCILASISYIILLEVIA. The PA domain occupies 92–215; sequence PNRNDTDASY…SSYNLLWSDL (124 aa). A helical membrane pass occupies residues 236–256; that stretch reads FWPFLLCFSPSIIMLITVQAL. Ser-280 bears the Phosphoserine mark. The segment at 321-363 adopts an RING-type; atypical zinc-finger fold; sequence CVICLESFTKGDKVVALPCKHEFHRPCIAKWIVDYRHACPTCN.

Its subcellular location is the golgi apparatus membrane. It localises to the vacuole membrane. This is an uncharacterized protein from Schizosaccharomyces pombe (strain 972 / ATCC 24843) (Fission yeast).